Reading from the N-terminus, the 184-residue chain is Uroplakin-2 (184 aa).

Residues 1–25 form the signal peptide; that stretch reads MASPLPVRTLPLILILLAVLAPGAS. Residues 26–84 constitute a propeptide that is removed on maturation; that stretch reads DFNISSLSGPLSPALTESLLVALPPCHLTGGNATLMVRRANDSKVVKSSFMVPPCRGRR. Residues N28, N57, and N66 are each glycosylated (N-linked (GlcNAc...) asparagine). Residues 85 to 155 are Lumenal-facing; the sequence is ELVSVVDSGS…IGLGMARTGG (71 aa). The chain crosses the membrane as a helical span at residues 156–180; that stretch reads MVVITVLLSVAMFLLVVGFITALAL. Over 181-184 the chain is Cytoplasmic; the sequence is GARK.

The protein belongs to the uroplakin-2 family. As to quaternary structure, interacts with uroplakin-1a (UPK1A). As to expression, expressed only in the urothelium. Localizes to urothelial superficial cells.

It is found in the cell membrane. In terms of biological role, component of the asymmetric unit membrane (AUM); a highly specialized biomembrane elaborated by terminally differentiated urothelial cells. May play an important role in regulating the assembly of the AUM. In Sus scrofa (Pig), this protein is Uroplakin-2 (UPK2).